A 557-amino-acid chain; its full sequence is Potassium-transporting ATPase potassium-binding subunit (557 aa).

The next 10 membrane-spanning stretches (helical) occupy residues 4 to 24 (LGAG…VHVP), 61 to 81 (TYAL…YAFL), 131 to 151 (GLTV…VALV), 174 to 194 (LRVL…TGVV), 253 to 273 (LEVF…GTLV), 280 to 300 (LAVL…TTWA), 375 to 395 (GLYG…LMVG), 412 to 432 (CAAL…AVAL), 483 to 503 (LAIW…AGAF), and 528 to 548 (LAVV…LGPI).

Belongs to the KdpA family. The system is composed of three essential subunits: KdpA, KdpB and KdpC.

It localises to the cell membrane. Its function is as follows. Part of the high-affinity ATP-driven potassium transport (or Kdp) system, which catalyzes the hydrolysis of ATP coupled with the electrogenic transport of potassium into the cytoplasm. This subunit binds the extracellular potassium ions and delivers the ions to the membrane domain of KdpB through an intramembrane tunnel. The sequence is that of Potassium-transporting ATPase potassium-binding subunit from Kineococcus radiotolerans (strain ATCC BAA-149 / DSM 14245 / SRS30216).